The sequence spans 470 residues: Sorting nexin-17 (470 aa).

One can recognise a PX domain in the interval 1–109; sequence MHFSIPETES…SFLRRAQQET (109 aa). Arg36, Ser38, Lys62, and Arg75 together coordinate a 1,2-diacyl-sn-glycero-3-phospho-(1D-myo-inositol-3-phosphate). The Ras-associating domain occupies 115–206; the sequence is EEVSLEVLLS…YKIVLRKSYW (92 aa). Residues 115-432 form an FERM-like region; sequence EEVSLEVLLS…DATRESMVKL (318 aa). The tract at residues 270 to 432 is PTB-like F3 module; it reads GYLRFDACVA…DATRESMVKL (163 aa). A phosphoserine mark is found at Ser336, Ser407, Ser409, Ser415, Ser421, Ser437, and Ser440. The disordered stretch occupies residues 401–426; that stretch reads GGTLRRSDSQQAVKSPPLLESPDATR. Positions 458–470 are interacts with the retriever complex; sequence GNFAFEGIGDEDL.

This sequence belongs to the sorting nexin family. In terms of assembly, monomer. Interacts with APP (via cytoplasmic YXNPXY motif). Interacts with KIF1B. Interacts with the C-termini of P-selectin, PTC, LDLR, VLDLR, LRP1 and LRP8. Interacts with KRIT1 (via N-terminus). Interacts with HRAS. Interacts with ITGB1 and ITGB5 (via NPxY motif). Interacts with CCDC22 and CCDC93; the interaction associates SNX17 with the CCC complex. Interacts (via C-terminus) with VPS26C and VPS35L; the interactions are direct and associate SNX17 with the retriever complex.

The protein resides in the cytoplasm. It localises to the early endosome. The protein localises to the cytoplasmic vesicle membrane. Its function is as follows. Critical regulator of endosomal recycling of numerous surface proteins, including integrins, signaling receptor and channels. Binds to NPxY sequences in the cytoplasmic tails of target cargos. Associates with retriever and CCC complexes to prevent lysosomal degradation and promote cell surface recycling of numerous cargos such as integrins ITGB1, ITGB5 and their associated alpha subunits. Also required for maintenance of normal cell surface levels of APP and LRP1. Interacts with membranes containing phosphatidylinositol 3-phosphate (PtdIns(3P)). The protein is Sorting nexin-17 (SNX17) of Homo sapiens (Human).